The following is a 557-amino-acid chain: Protein PNS1 (557 aa).

Positions 1–58 (MSTEKQYQPQQPPPAYTGQGPDNGNAYGYPESYGKTETHSGDSCSGDTSMNPQQQGQQ) are disordered. The Cytoplasmic portion of the chain corresponds to 1-99 (MSTEKQYQPQ…DNNKPKFNDW (99 aa)). The segment covering 41–58 (GDSCSGDTSMNPQQQGQQ) has biased composition (polar residues). The helical transmembrane segment at 100-120 (PFIIVFLLTLCGFIVVASLTL) threads the bilayer. Topologically, residues 121–147 (RAWSQTYSSTGSGIYHDFDTGTLNTNS) are extracellular. A helical membrane pass occupies residues 148–168 (VILLVFSVVIAIFFAFIGIVL). The Cytoplasmic portion of the chain corresponds to 169–174 (CRAYPK). Residues 175–195 (FFIYAGMIVNILAALGTAIMY) traverse the membrane as a helical segment. Residues 196-200 (MSLKY) are Extracellular-facing. The helical transmembrane segment at 201–221 (WSAGIVFLIFTFMTAWCYWGM) threads the bilayer. The Cytoplasmic segment spans residues 222-246 (RSRIPLTVAILRVIVLAMKNCPQSL). Residues 247-267 (FVSFFGTIVASAFAMLFSTVV) traverse the membrane as a helical segment. Over 268–292 (VATYMKYDPSNTNSGCNVSGGDCSH) the chain is Extracellular. The N-linked (GlcNAc...) asparagine glycan is linked to Asn-284. Residues 293 to 313 (AKLIGVLVVVFFCGYYISEVI) traverse the membrane as a helical segment. Topologically, residues 314–350 (RNVMHCTVSGVFGSWYYRYKSDQGMPKWPAMGAFKRA) are cytoplasmic. The helical transmembrane segment at 351–371 (MTYSFGSICFGSLIVSIIETF) threads the bilayer. At 372–393 (RQLLQLGKQAAIASTDNANWIR) the chain is on the extracellular side. The helical transmembrane segment at 394 to 414 (IIFWLIDMLVGFIQWIAQYFN) threads the bilayer. At 415–454 (HYAYCIIALYGKPYLKAAKQTWYMFREKGIDALINDNLVN) the chain is on the cytoplasmic side. Residues 455–475 (VALGFYSLFASYMSCLFAFLY) form a helical membrane-spanning segment. Over 476–488 (LRFTKPGYNSDGD) the chain is Extracellular. A helical transmembrane segment spans residues 489–509 (FNAPLMAFAFVIALQLTNIAN). Over 510–557 (ETIRSGCATFFTALGHDPEVFQAQYPDRFDEIFRSYPQVLNKLTHQDV) the chain is Cytoplasmic.

This sequence belongs to the CTL (choline transporter-like) family.

The protein localises to the cell membrane. Functionally, probably involved in transport through the plasma membrane. The protein is Protein PNS1 (PNS1) of Candida glabrata (strain ATCC 2001 / BCRC 20586 / JCM 3761 / NBRC 0622 / NRRL Y-65 / CBS 138) (Yeast).